We begin with the raw amino-acid sequence, 179 residues long: MSRIGKLPIQVPAGVDVTIDGRTVAVKGPKGSLTHTVAAPIEVSKGEDGVLNVTRPNDERQNKALHGLSRTLVANMITGVTAGYSKALEISGVGYRVQAKGSNLEFALGYSHPILIEAPEGITFKVESPTKLSVEGIDKQKVGEVAANIRKLRKPDPYKAKGVKYAGEVIRRKVGKAGK.

It belongs to the universal ribosomal protein uL6 family. Part of the 50S ribosomal subunit.

In terms of biological role, this protein binds to the 23S rRNA, and is important in its secondary structure. It is located near the subunit interface in the base of the L7/L12 stalk, and near the tRNA binding site of the peptidyltransferase center. The polypeptide is Large ribosomal subunit protein uL6 (Streptomyces griseus subsp. griseus (strain JCM 4626 / CBS 651.72 / NBRC 13350 / KCC S-0626 / ISP 5235)).